Reading from the N-terminus, the 262-residue chain is Phosphomannomutase 1 (262 aa).

The residue at position 2 (Ala2) is an N-acetylalanine. The active-site Nucleophile is the Asp19. Mg(2+) contacts are provided by Asp19 and Asp21. Asp21 acts as the Proton donor/acceptor in catalysis. 7 residues coordinate alpha-D-mannose 1-phosphate: Arg28, Arg132, Arg143, Arg150, Met186, Ser188, and Asp190. Residues Asn218, Tyr230, Asp232, and Thr235 each contribute to the Mg(2+) site. The residue at position 242 (Ser242) is a Phosphoserine.

Belongs to the eukaryotic PMM family. Homodimer. Requires Mg(2+) as cofactor. As to expression, present in brain, where it is restricted to neuronal cell bodies. Present at lower levels in pancreas, liver, lung, gonads, uterus, adrenal glands and pituitary (at protein level). Undetectable in intestine.

The protein resides in the cytoplasm. It carries out the reaction alpha-D-mannose 1-phosphate = D-mannose 6-phosphate. Its pathway is nucleotide-sugar biosynthesis; GDP-alpha-D-mannose biosynthesis; alpha-D-mannose 1-phosphate from D-fructose 6-phosphate: step 2/2. With respect to regulation, IMP, a metabolite whose concentration is elevated in anoxia, inhibits phosphomannomutase and phosphoglucomutase activities and strongly enhances glucose-1,6-bisphosphatase activity. Its function is as follows. Involved in the synthesis of the GDP-mannose and dolichol-phosphate-mannose required for a number of critical mannosyl transfer reactions. In addition, may be responsible for the degradation of glucose-1,6-bisphosphate in ischemic brain. The chain is Phosphomannomutase 1 (Pmm1) from Mus musculus (Mouse).